Reading from the N-terminus, the 640-residue chain is Endoglucanase 1 (640 aa).

An N-terminal signal peptide occupies residues 1–24; the sequence is MARRGGAAASSSMANLLGVALVLA. The Nucleophile role is filled by aspartate 94. Catalysis depends on residues histidine 433, aspartate 485, and glutamate 494. N-linked (GlcNAc...) asparagine glycosylation is found at asparagine 528 and asparagine 548.

The protein belongs to the glycosyl hydrolase 9 (cellulase E) family. In terms of tissue distribution, expressed in roots, leaf sheaths and flowers.

It localises to the secreted. It carries out the reaction Endohydrolysis of (1-&gt;4)-beta-D-glucosidic linkages in cellulose, lichenin and cereal beta-D-glucans.. The protein is Endoglucanase 1 (GLU7) of Oryza sativa subsp. japonica (Rice).